The primary structure comprises 894 residues: Tyrosine-protein kinase receptor UFO (894 aa).

Residues 1-25 (MAWRCPRMGRVPLAWCLALCGWACM) form the signal peptide. Residues 26-92 (APRGTQAEES…QTQVPLGEDE (67 aa)) are interaction with GAS6. At 26 to 451 (APRGTQAEES…STPAFSWPWW (426 aa)) the chain is on the extracellular side. 2 Ig-like C2-type domains span residues 27–128 (PRGT…TFVS) and 139–222 (PYFL…ATIT). N43 carries N-linked (GlcNAc...) asparagine glycosylation. The cysteines at positions 56 and 117 are disulfide-linked. N-linked (GlcNAc...) asparagine glycans are attached at residues N157 and N198. Cysteines 160 and 205 form a disulfide. 2 consecutive Fibronectin type-III domains span residues 227-331 (QPRN…TPEG) and 336-428 (PPEN…AWRP). 3 N-linked (GlcNAc...) asparagine glycosylation sites follow: N339, N345, and N401. A helical transmembrane segment spans residues 452–472 (YVLLGAVVAAACVLILALFLV). Residues 473-894 (HRRKKETRYG…PAAPGQEDGA (422 aa)) are Cytoplasmic-facing. The Protein kinase domain maps to 536–807 (VALGKTLGEG…ELREDLENTL (272 aa)). ATP-binding positions include 542 to 550 (LGEGEFGAV) and K567. The active-site Proton acceptor is D672. A phosphotyrosine; by autocatalysis mark is found at Y703, Y779, and Y821. Disordered stretches follow at residues 823–853 (NMDE…DSCS) and 866–894 (YVLC…EDGA). Y866 carries the phosphotyrosine; by autocatalysis modification. Position 884 is a phosphoserine (S884).

It belongs to the protein kinase superfamily. Tyr protein kinase family. AXL/UFO subfamily. In terms of assembly, heterodimer and heterotetramer with ligand GAS6. Interacts with CBL, GRB2, LCK, NCK2, PIK3R1, PIK3R2, PIK3R3, PLCG1, SOCS1 and TNS2. Part of a complex including AXL, TNK2 and GRB2, in which GRB2 promotes AXL recruitment by TNK2. Monoubiquitinated upon GAS6-binding. A very small proportion of the receptor could be subjected to polyubiquitination in a very transient fashion. In terms of processing, phosphorylated at tyrosine residues by autocatalysis, which activates kinase activity. Highly expressed in metastatic colon tumors. Expressed in primary colon tumors. Weakly expressed in normal colon tissue.

It localises to the cell membrane. It carries out the reaction L-tyrosyl-[protein] + ATP = O-phospho-L-tyrosyl-[protein] + ADP + H(+). With respect to regulation, activated by GAS6-binding and subsequent autophosphorylation. Its function is as follows. Receptor tyrosine kinase that transduces signals from the extracellular matrix into the cytoplasm by binding growth factor GAS6 and which is thus regulating many physiological processes including cell survival, cell proliferation, migration and differentiation. Ligand binding at the cell surface induces dimerization and autophosphorylation of AXL. Following activation by ligand, AXL binds and induces tyrosine phosphorylation of PI3-kinase subunits PIK3R1, PIK3R2 and PIK3R3; but also GRB2, PLCG1, LCK and PTPN11. Other downstream substrate candidates for AXL are CBL, NCK2, SOCS1 and TNS2. Recruitment of GRB2 and phosphatidylinositol 3 kinase regulatory subunits by AXL leads to the downstream activation of the AKT kinase. GAS6/AXL signaling plays a role in various processes such as endothelial cell survival during acidification by preventing apoptosis, optimal cytokine signaling during human natural killer cell development, hepatic regeneration, gonadotropin-releasing hormone neuron survival and migration, platelet activation, or regulation of thrombotic responses. Also plays an important role in inhibition of Toll-like receptors (TLRs)-mediated innate immune response. In terms of biological role, (Microbial infection) Acts as a receptor for lassa virus and lymphocytic choriomeningitis virus, possibly through GAS6 binding to phosphatidyl-serine at the surface of virion envelope. Functionally, (Microbial infection) Acts as a receptor for Ebolavirus, possibly through GAS6 binding to phosphatidyl-serine at the surface of virion envelope. (Microbial infection) Promotes Zika virus entry in glial cells, Sertoli cells and astrocytes. Additionally, Zika virus potentiates AXL kinase activity to antagonize type I interferon signaling and thereby promotes infection. Interferon signaling inhibition occurs via an SOCS1-dependent mechanism. This chain is Tyrosine-protein kinase receptor UFO (AXL), found in Homo sapiens (Human).